Consider the following 174-residue polypeptide: Repair DNA polymerase X (174 aa).

Residues arginine 42 to aspartate 51 form an involved in ssDNA binding region. Mg(2+)-binding residues include aspartate 49 and aspartate 51. Cysteine 81 and cysteine 86 are joined by a disulfide. Aspartate 100 lines the Mg(2+) pocket.

The protein belongs to the DNA polymerase type-X family. Mg(2+) is required as a cofactor.

The protein resides in the virion. The catalysed reaction is DNA(n) + a 2'-deoxyribonucleoside 5'-triphosphate = DNA(n+1) + diphosphate. Its function is as follows. Error-prone polymerase lacking a proofreading 3'-5' exonuclease which catalyzes the gap-filling reaction during the DNA repair process. Specifically binds intermediates in the single-nucleotide base-excision repair process. Also catalyzes DNA polymerization with low nucleotide-insertion fidelity. Probably acts as a strategic DNA mutase, which gives rise to a rapid emergence of variants. Generates mismatched G-G pairs, in that case, the polymerase first binds the deoxynucleotide followed by mismatch formation. Together with the viral DNA ligase, fills the single nucleotide gaps generated by the AP endonuclease. Binds DNA with high affinity via the helix alphaE. This is Repair DNA polymerase X from Ornithodoros (relapsing fever ticks).